The sequence spans 535 residues: BAR/IMD domain-containing adapter protein 2 (535 aa).

The IMD domain occupies M1–S250. The stretch at M1–N251 forms a coiled coil. Phosphoserine occurs at positions 262, 324, 326, and 337. The segment at S308–A370 is disordered. The span at Q321–S335 shows a compositional bias: low complexity. T341 carries the post-translational modification Phosphothreonine. S347 is subject to Phosphoserine. A compositionally biased stretch (polar residues) spans T349–M368. T361 carries the phosphothreonine modification. A phosphoserine mark is found at S367, S385, S396, and S455. The SH3 domain maps to N375–S438. The disordered stretch occupies residues H445–T486. Composition is skewed to polar residues over residues S447 to N458 and G473 to T486.

In terms of assembly, homodimer. Interacts with CDC42 and RAC1 that have been activated by GTP binding. Binds TIAM1. Interacts with ATN1, ADGRB1, DIAPH1, EPS8, SHANK1, SHANK2, SHANK3, WASF1 and WASF2. Interacts with ENAH after recruitment of CDC42. Post-translationally, phosphorylated on tyrosine residues by INSR in response to insulin treatment. In terms of tissue distribution, ubiquitous.

Its subcellular location is the cytoplasm. The protein localises to the membrane. The protein resides in the cell projection. It is found in the filopodium. It localises to the ruffle. Its subcellular location is the cytoskeleton. Functionally, adapter protein that links membrane-bound small G-proteins to cytoplasmic effector proteins. Necessary for CDC42-mediated reorganization of the actin cytoskeleton and for RAC1-mediated membrane ruffling. Involved in the regulation of the actin cytoskeleton by WASF family members and the Arp2/3 complex. Plays a role in neurite growth. Acts syngeristically with ENAH to promote filipodia formation. Plays a role in the reorganization of the actin cytoskeleton in response to bacterial infection. Participates in actin bundling when associated with EPS8, promoting filopodial protrusions. The chain is BAR/IMD domain-containing adapter protein 2 (Baiap2) from Rattus norvegicus (Rat).